The chain runs to 285 residues: ATP synthase gamma chain (285 aa).

Belongs to the ATPase gamma chain family. As to quaternary structure, F-type ATPases have 2 components, CF(1) - the catalytic core - and CF(0) - the membrane proton channel. CF(1) has five subunits: alpha(3), beta(3), gamma(1), delta(1), epsilon(1). CF(0) has three main subunits: a, b and c.

It is found in the cell membrane. In terms of biological role, produces ATP from ADP in the presence of a proton gradient across the membrane. The gamma chain is believed to be important in regulating ATPase activity and the flow of protons through the CF(0) complex. The protein is ATP synthase gamma chain of Geobacillus sp. (strain WCH70).